We begin with the raw amino-acid sequence, 129 residues long: Small ribosomal subunit protein uS11 (129 aa).

Belongs to the universal ribosomal protein uS11 family. Part of the 30S ribosomal subunit. Interacts with proteins S7 and S18. Binds to IF-3.

In terms of biological role, located on the platform of the 30S subunit, it bridges several disparate RNA helices of the 16S rRNA. Forms part of the Shine-Dalgarno cleft in the 70S ribosome. The chain is Small ribosomal subunit protein uS11 from Enterococcus faecalis (strain ATCC 700802 / V583).